The chain runs to 317 residues: Large ribosomal subunit protein uL10 (317 aa).

Residues 280-290 (SASAAPAAGGA) show a composition bias toward low complexity. The tract at residues 280–317 (SASAAPAAGGATEKKEEAKKPESESEEEDDDMGFGLFD) is disordered. The span at 291–302 (TEKKEEAKKPES) shows a compositional bias: basic and acidic residues. A Phosphoserine modification is found at S302. S304 carries the phosphoserine; by CK1 modification.

It belongs to the universal ribosomal protein uL10 family. In terms of assembly, P0 forms a pentameric complex by interaction with dimers of P1 and P2.

The protein resides in the cytoplasm. It localises to the nucleus. Functionally, ribosomal protein P0 is the functional equivalent of E.coli protein L10. The protein is Large ribosomal subunit protein uL10 (RpLP0) of Drosophila melanogaster (Fruit fly).